We begin with the raw amino-acid sequence, 121 residues long: Large ribosomal subunit protein bL12 (121 aa).

It belongs to the bacterial ribosomal protein bL12 family. As to quaternary structure, homodimer. Part of the ribosomal stalk of the 50S ribosomal subunit. Forms a multimeric L10(L12)X complex, where L10 forms an elongated spine to which 2 to 4 L12 dimers bind in a sequential fashion. Binds GTP-bound translation factors.

In terms of biological role, forms part of the ribosomal stalk which helps the ribosome interact with GTP-bound translation factors. Is thus essential for accurate translation. This is Large ribosomal subunit protein bL12 from Alkaliphilus oremlandii (strain OhILAs) (Clostridium oremlandii (strain OhILAs)).